The following is a 94-amino-acid chain: Trp operon repressor homolog (94 aa).

A DNA-binding region spans residues 58-81 (QREIAEKYGVSIAQITRGSNALKG).

Belongs to the TrpR family. Homodimer.

It localises to the cytoplasm. Functionally, this protein is an aporepressor. When complexed with L-tryptophan it binds the operator region of the trp operon and prevents the initiation of transcription. The chain is Trp operon repressor homolog from Chlamydia trachomatis serovar L2 (strain ATCC VR-902B / DSM 19102 / 434/Bu).